We begin with the raw amino-acid sequence, 289 residues long: Ribosomal RNA small subunit methyltransferase A (289 aa).

Residues N21, L23, G48, E69, D94, and N120 each coordinate S-adenosyl-L-methionine.

The protein belongs to the class I-like SAM-binding methyltransferase superfamily. rRNA adenine N(6)-methyltransferase family. RsmA subfamily.

It localises to the cytoplasm. It carries out the reaction adenosine(1518)/adenosine(1519) in 16S rRNA + 4 S-adenosyl-L-methionine = N(6)-dimethyladenosine(1518)/N(6)-dimethyladenosine(1519) in 16S rRNA + 4 S-adenosyl-L-homocysteine + 4 H(+). Its function is as follows. Specifically dimethylates two adjacent adenosines (A1518 and A1519) in the loop of a conserved hairpin near the 3'-end of 16S rRNA in the 30S particle. May play a critical role in biogenesis of 30S subunits. This Actinobacillus pleuropneumoniae serotype 3 (strain JL03) protein is Ribosomal RNA small subunit methyltransferase A.